A 415-amino-acid chain; its full sequence is Gamma-glutamyl phosphate reductase (415 aa).

It belongs to the gamma-glutamyl phosphate reductase family.

The protein localises to the cytoplasm. The catalysed reaction is L-glutamate 5-semialdehyde + phosphate + NADP(+) = L-glutamyl 5-phosphate + NADPH + H(+). It functions in the pathway amino-acid biosynthesis; L-proline biosynthesis; L-glutamate 5-semialdehyde from L-glutamate: step 2/2. In terms of biological role, catalyzes the NADPH-dependent reduction of L-glutamate 5-phosphate into L-glutamate 5-semialdehyde and phosphate. The product spontaneously undergoes cyclization to form 1-pyrroline-5-carboxylate. In Mycolicibacterium gilvum (strain PYR-GCK) (Mycobacterium gilvum (strain PYR-GCK)), this protein is Gamma-glutamyl phosphate reductase.